We begin with the raw amino-acid sequence, 272 residues long: Putative pyruvate, phosphate dikinase regulatory protein (272 aa).

151–158 (GISRTSKT) contacts ADP.

It belongs to the pyruvate, phosphate/water dikinase regulatory protein family. PDRP subfamily.

It catalyses the reaction N(tele)-phospho-L-histidyl/L-threonyl-[pyruvate, phosphate dikinase] + ADP = N(tele)-phospho-L-histidyl/O-phospho-L-threonyl-[pyruvate, phosphate dikinase] + AMP + H(+). The enzyme catalyses N(tele)-phospho-L-histidyl/O-phospho-L-threonyl-[pyruvate, phosphate dikinase] + phosphate + H(+) = N(tele)-phospho-L-histidyl/L-threonyl-[pyruvate, phosphate dikinase] + diphosphate. Functionally, bifunctional serine/threonine kinase and phosphorylase involved in the regulation of the pyruvate, phosphate dikinase (PPDK) by catalyzing its phosphorylation/dephosphorylation. The chain is Putative pyruvate, phosphate dikinase regulatory protein from Staphylococcus aureus (strain Mu3 / ATCC 700698).